We begin with the raw amino-acid sequence, 367 residues long: Septin-1 (367 aa).

The region spanning 22-296 (KGFDFTLMVA…EGYRARCLQS (275 aa)) is the Septin-type G domain. A G1 motif region spans residues 32-39 (GESGLGKS). Residues 32–39 (GESGLGKS), Thr66, Gly92, and 171–179 (KADALMPKE) each bind GTP. The tract at residues 89–92 (DTPG) is G3 motif. A G4 motif region spans residues 170-173 (GKAD). Position 206 is a phosphoserine (Ser206). GTP contacts are provided by Gly229 and Arg245. Ser248 bears the Phosphoserine; by AURKB mark. Thr251 carries the post-translational modification Phosphothreonine. A phosphoserine; by AURKB mark is found at Ser307 and Ser315.

The protein belongs to the TRAFAC class TrmE-Era-EngA-EngB-Septin-like GTPase superfamily. Septin GTPase family. In terms of assembly, septins polymerize into heterooligomeric protein complexes that form filaments, and can associate with cellular membranes, actin filaments and microtubules. GTPase activity is required for filament formation. Interacts with AURKB.

The protein localises to the cytoplasm. The protein resides in the cytoskeleton. It localises to the microtubule organizing center. Its subcellular location is the centrosome. It is found in the midbody. In terms of biological role, filament-forming cytoskeletal GTPase. May play a role in cytokinesis (Potential). The polypeptide is Septin-1 (Bos taurus (Bovine)).